Here is a 466-residue protein sequence, read N- to C-terminus: Ribulose bisphosphate carboxylase large chain (466 aa).

Lys5 carries the N6,N6,N6-trimethyllysine modification. 2 residues coordinate substrate: Asn114 and Thr164. Lys166 acts as the Proton acceptor in catalysis. Lys168 lines the substrate pocket. Residues Lys192, Asp194, and Glu195 each coordinate Mg(2+). An N6-carboxylysine modification is found at Lys192. The active-site Proton acceptor is the His285. 3 residues coordinate substrate: Arg286, His318, and Ser370.

Belongs to the RuBisCO large chain family. Type I subfamily. Heterohexadecamer of 8 large chains and 8 small chains; disulfide-linked. The disulfide link is formed within the large subunit homodimers. Requires Mg(2+) as cofactor. The disulfide bond which can form in the large chain dimeric partners within the hexadecamer appears to be associated with oxidative stress and protein turnover.

It is found in the plastid. The protein resides in the chloroplast. The enzyme catalyses 2 (2R)-3-phosphoglycerate + 2 H(+) = D-ribulose 1,5-bisphosphate + CO2 + H2O. The catalysed reaction is D-ribulose 1,5-bisphosphate + O2 = 2-phosphoglycolate + (2R)-3-phosphoglycerate + 2 H(+). Functionally, ruBisCO catalyzes two reactions: the carboxylation of D-ribulose 1,5-bisphosphate, the primary event in carbon dioxide fixation, as well as the oxidative fragmentation of the pentose substrate in the photorespiration process. Both reactions occur simultaneously and in competition at the same active site. The chain is Ribulose bisphosphate carboxylase large chain from Eremothamnus marlothianus.